Here is a 278-residue protein sequence, read N- to C-terminus: 4-diphosphocytidyl-2-C-methyl-D-erythritol kinase (278 aa).

Residue K9 is part of the active site. Residue 93-103 coordinates ATP; sequence PLGGGLGGGSS. D135 is a catalytic residue.

It belongs to the GHMP kinase family. IspE subfamily.

The catalysed reaction is 4-CDP-2-C-methyl-D-erythritol + ATP = 4-CDP-2-C-methyl-D-erythritol 2-phosphate + ADP + H(+). It participates in isoprenoid biosynthesis; isopentenyl diphosphate biosynthesis via DXP pathway; isopentenyl diphosphate from 1-deoxy-D-xylulose 5-phosphate: step 3/6. Its function is as follows. Catalyzes the phosphorylation of the position 2 hydroxy group of 4-diphosphocytidyl-2C-methyl-D-erythritol. The chain is 4-diphosphocytidyl-2-C-methyl-D-erythritol kinase from Nitrosomonas europaea (strain ATCC 19718 / CIP 103999 / KCTC 2705 / NBRC 14298).